A 549-amino-acid polypeptide reads, in one-letter code: ATP synthase subunit alpha (549 aa).

172–179 (GDRKTGKT) is a binding site for ATP. The interval 513–549 (SSTGESVVPDEHVEAMDEEDLGKESVKVKKPAPQKKK) is disordered. Residues 540–549 (VKKPAPQKKK) are compositionally biased toward basic residues.

It belongs to the ATPase alpha/beta chains family. F-type ATPases have 2 components, CF(1) - the catalytic core - and CF(0) - the membrane proton channel. CF(1) has five subunits: alpha(3), beta(3), gamma(1), delta(1), epsilon(1). CF(0) has three main subunits: a(1), b(2) and c(9-12). The alpha and beta chains form an alternating ring which encloses part of the gamma chain. CF(1) is attached to CF(0) by a central stalk formed by the gamma and epsilon chains, while a peripheral stalk is formed by the delta and b chains.

The protein resides in the cell membrane. It catalyses the reaction ATP + H2O + 4 H(+)(in) = ADP + phosphate + 5 H(+)(out). Functionally, produces ATP from ADP in the presence of a proton gradient across the membrane. The alpha chain is a regulatory subunit. This is ATP synthase subunit alpha from Mycobacterium marinum (strain ATCC BAA-535 / M).